The sequence spans 529 residues: Nuclear distribution protein PAC1 (529 aa).

Residues 68–89 adopt a coiled-coil conformation; it reads RLQHKIIDLEGEVSNLRTVIDS. 7 WD repeats span residues 120-159, 165-218, 221-261, 264-318, 321-395, 416-455, and 496-529; these read QSHQ…SLIP, AHIR…HIRT, GHEH…CIKT, GHSD…GLSL, GHTH…FRPH, GHQS…VNGR, and TEED…RLWS.

This sequence belongs to the WD repeat LIS1/nudF family. Self-associates. Interacts with NDL1 and dynein.

The protein resides in the cytoplasm. It is found in the cytoskeleton. The protein localises to the spindle pole. Positively regulates the activity of the minus-end directed microtubule motor protein dynein. Plays a central role in positioning the mitotic spindle at the bud neck during cell division. Targets cytoplasmic dynein to microtubule plus ends, thereby promoting dynein-mediated microtubule sliding along the bud cortex and consequently the movement of the mitotic spindle to the bud neck. The sequence is that of Nuclear distribution protein PAC1 from Debaryomyces hansenii (strain ATCC 36239 / CBS 767 / BCRC 21394 / JCM 1990 / NBRC 0083 / IGC 2968) (Yeast).